A 390-amino-acid chain; its full sequence is 2-deoxy-scyllo-inosose synthase (390 aa).

Residues Asp-42, 73–76, 105–109, 129–130, 140–142, and 151–152 each bind NAD(+); these read EQNK, GVTGN, TT, SLK, and KN. Lys-142 is an active-site residue. Glu-184 lines the Co(2+) pocket. Glu-244 is a catalytic residue. The Co(2+) site is built by His-247 and His-263. The tract at residues 371 to 390 is disordered; that stretch reads PPRPAAARTDDAATVLGGAG.

The protein belongs to the sugar phosphate cyclases superfamily. DOI synthase family. NAD(+) serves as cofactor. The cofactor is Co(2+).

It catalyses the reaction D-glucose 6-phosphate = 2-deoxy-L-scyllo-inosose + phosphate. The protein operates within metabolic intermediate biosynthesis; 2-deoxystreptamine biosynthesis; 2-deoxystreptamine from D-glucose 6-phosphate: step 1/4. It participates in antibiotic biosynthesis; kanamycin biosynthesis. Its function is as follows. Catalyzes the intramolecular carbocycle formation from D-glucose-6-phosphate to 2-deoxy-scyllo-inosose (DOI). This chain is 2-deoxy-scyllo-inosose synthase (kanC), found in Streptomyces kanamyceticus.